Here is a 283-residue protein sequence, read N- to C-terminus: Rhomboid-like protease 2 (283 aa).

The segment covering 1-11 (MANIRTLSDYA) has biased composition (polar residues). The segment at 1–26 (MANIRTLSDYASSPPRGSSALEGEVG) is disordered. 3 consecutive transmembrane segments (helical) span residues 62-82 (IIIISFVQIAVYIASLAAGLA), 114-134 (ICPLFLHLNLFHILMNLWVQI), and 149-169 (LLAVYFGVGVLANMISAAVLF). Residue Ser178 is the Nucleophile of the active site. Transmembrane regions (helical) follow at residues 179–199 (TAVFALIGVQLAELALIWHAI), 205–225 (AIISVCICLFFVFVSSFGSHM), 227–247 (SVGHIGGLVMGFAAGIWLNEN), and 260–280 (LTSQVALAAAPILSCIFIFLV). His230 is a catalytic residue.

The protein belongs to the peptidase S54 family.

The protein resides in the membrane. The enzyme catalyses Cleaves type-1 transmembrane domains using a catalytic dyad composed of serine and histidine that are contributed by different transmembrane domains.. Its function is as follows. Serine protease involved in intramembrane proteolysis and the subsequent release of polypeptides from their membrane anchors. The polypeptide is Rhomboid-like protease 2 (ROM2) (Toxoplasma gondii).